The following is a 495-amino-acid chain: Maturase K (495 aa).

Belongs to the intron maturase 2 family. MatK subfamily.

It is found in the plastid. It localises to the chloroplast. Functionally, usually encoded in the trnK tRNA gene intron. Probably assists in splicing its own and other chloroplast group II introns. The polypeptide is Maturase K (Torreya californica (California nutmeg)).